Consider the following 813-residue polypeptide: Immunoglobulin superfamily DCC subclass member 3 (813 aa).

The disordered stretch occupies residues 1–21; sequence MAEPRTASPRRLPALRRPGFL. The first 47 residues, 1 to 47, serve as a signal peptide directing secretion; sequence MAEPRTASPRRLPALRRPGFLPPLLPPPPPPLLLLLLLLPLPAPSLG. The segment covering 9–19 has biased composition (low complexity); the sequence is PRRLPALRRPG. 4 consecutive Ig-like C2-type domains span residues 49-151, 151-232, 250-333, and 341-428; these read GHSA…ATMS, SDFH…VRVS, PTIL…RTAQ, and PAEF…ARLT. 2 disulfides stabilise this stretch: cysteine 75/cysteine 129 and cysteine 172/cysteine 221. N-linked (GlcNAc...) asparagine glycosylation is present at asparagine 105. Asparagine 258 carries an N-linked (GlcNAc...) asparagine glycan. Intrachain disulfides connect cysteine 271–cysteine 319 and cysteine 363–cysteine 412. 2 N-linked (GlcNAc...) asparagine glycosylation sites follow: asparagine 393 and asparagine 394. 2 consecutive Fibronectin type-III domains span residues 438–532 and 535–630; these read PPRN…TLGE and VPPP…ASER. Asparagine 592, asparagine 616, and asparagine 646 each carry an N-linked (GlcNAc...) asparagine glycan. Residues 653–673 traverse the membrane as a helical segment; it reads IVIGIHIGVTCIIFCVLFLLF. Disordered stretches follow at residues 689 to 724 and 775 to 813; these read LSPPQGPRSQRDPGILALNGLSRGEGGQLSRDEKPV and TTEATSPCAGPGPVPAPQDIGPVPLSEGQTQPPAVAAPQ.

Belongs to the immunoglobulin superfamily. DCC family. In terms of tissue distribution, detected in cerebellum, kidney, heart, lung, skeletal muscle and spleen.

The protein localises to the membrane. The protein is Immunoglobulin superfamily DCC subclass member 3 (Igdcc3) of Mus musculus (Mouse).